Consider the following 1324-residue polypeptide: DNA-directed RNA polymerase subunit beta' (1324 aa).

Residues Cys-219, Cys-292, Cys-299, and Cys-302 each contribute to the Zn(2+) site. The disordered stretch occupies residues Ala-1293–Phe-1324. Over residues Asp-1302–Phe-1324 the composition is skewed to acidic residues.

This sequence belongs to the RNA polymerase beta' chain family. RpoC2 subfamily. As to quaternary structure, in cyanobacteria the RNAP catalytic core is composed of 2 alpha, 1 beta, 1 beta', 1 gamma and 1 omega subunit. When a sigma factor is associated with the core the holoenzyme is formed, which can initiate transcription. The cofactor is Zn(2+).

It catalyses the reaction RNA(n) + a ribonucleoside 5'-triphosphate = RNA(n+1) + diphosphate. In terms of biological role, DNA-dependent RNA polymerase catalyzes the transcription of DNA into RNA using the four ribonucleoside triphosphates as substrates. This chain is DNA-directed RNA polymerase subunit beta', found in Thermosynechococcus vestitus (strain NIES-2133 / IAM M-273 / BP-1).